We begin with the raw amino-acid sequence, 433 residues long: Protein RETICULATA-RELATED 1, chloroplastic (433 aa).

Residues Met1–Cys63 constitute a chloroplast transit peptide. Val64 carries the post-translational modification N-acetylvaline. A compositionally biased stretch (acidic residues) spans Asp93–Asp105. Positions Asp93–Lys143 are disordered. Over residues Asn110–Asp127 the composition is skewed to gly residues. The segment covering Gly128–Lys139 has biased composition (acidic residues). 2 helical membrane-spanning segments follow: residues Leu249–Ala269 and Leu323–Ile343.

Belongs to the RETICULATA family. As to expression, expressed in root vasculature, distal region of young leaf primordia, leaf bundle sheath cells, hydathodes and pollen grains.

It is found in the plastid. The protein localises to the chloroplast membrane. Its function is as follows. May play a role in leaf development. This Arabidopsis thaliana (Mouse-ear cress) protein is Protein RETICULATA-RELATED 1, chloroplastic.